The chain runs to 864 residues: Alanine--tRNA ligase (864 aa).

His-553, His-557, Cys-655, and His-659 together coordinate Zn(2+). The segment at 828 to 847 (VGGKGGGRPDMAQAGGKDPS) is disordered.

Belongs to the class-II aminoacyl-tRNA synthetase family. Zn(2+) is required as a cofactor.

The protein localises to the cytoplasm. It carries out the reaction tRNA(Ala) + L-alanine + ATP = L-alanyl-tRNA(Ala) + AMP + diphosphate. Functionally, catalyzes the attachment of alanine to tRNA(Ala) in a two-step reaction: alanine is first activated by ATP to form Ala-AMP and then transferred to the acceptor end of tRNA(Ala). Also edits incorrectly charged Ser-tRNA(Ala) and Gly-tRNA(Ala) via its editing domain. This chain is Alanine--tRNA ligase, found in Hydrogenovibrio crunogenus (strain DSM 25203 / XCL-2) (Thiomicrospira crunogena).